We begin with the raw amino-acid sequence, 181 residues long: Protein OPG005 (181 aa).

The polypeptide is Protein OPG005 (OPG005) (Vaccinia virus (strain Copenhagen) (VACV)).